A 71-amino-acid chain; its full sequence is Small ribosomal subunit protein bS21 (71 aa).

Belongs to the bacterial ribosomal protein bS21 family.

This is Small ribosomal subunit protein bS21 from Vesicomyosocius okutanii subsp. Calyptogena okutanii (strain HA).